A 420-amino-acid chain; its full sequence is Putative polyketide beta-ketoacyl synthase 1 (420 aa).

Residues 3–414 (QRRVAITGIE…GFQSAMVLTS (412 aa)) enclose the Ketosynthase family 3 (KS3) domain. Residues cysteine 169, histidine 307, and histidine 344 each act as for beta-ketoacyl synthase activity in the active site.

The protein belongs to the thiolase-like superfamily. Beta-ketoacyl-ACP synthases family.

Its pathway is antifungal biosynthesis; monensin biosynthesis. This chain is Putative polyketide beta-ketoacyl synthase 1, found in Streptomyces virginiae (Streptomyces cinnamonensis).